Consider the following 184-residue polypeptide: UPF0669 protein C6orf120 homolog (184 aa).

The first 23 residues, 1-23 (MAAPWTGALLLLLASQAVSSAQA), serve as a signal peptide directing secretion. N-linked (GlcNAc...) asparagine glycosylation occurs at Asn-47.

This sequence belongs to the UPF0669 family.

The protein localises to the secreted. Functionally, may be involved in induction of apoptosis in CD4(+) T-cells, but not CD8(+) T-cells or hepatocytes. The chain is UPF0669 protein C6orf120 homolog from Bos taurus (Bovine).